Consider the following 321-residue polypeptide: Torsin-2A (321 aa).

The signal sequence occupies residues 1–26 (MAVARHGYRPWGSILGLLGLALAAAA). Position 93-100 (93-100 (GWTGTGKS)) interacts with ATP. Asn149 is a glycosylation site (N-linked (GlcNAc...) asparagine).

This sequence belongs to the ClpA/ClpB family. Torsin subfamily. Homohexamer. Interacts with TOR1AIP1. Post-translationally, N-glycosylated. As to expression, expressed at similar levels in liver, muscle and brain (at protein level).

It is found in the endoplasmic reticulum lumen. The sequence is that of Torsin-2A (Tor2a) from Mus musculus (Mouse).